Reading from the N-terminus, the 146-residue chain is Aminoglycoside N(6')-acetyltransferase type 1 (146 aa).

An N-acetyltransferase domain is found at 1 to 146 (MNIMPVSESL…RVVYFKKHIG (146 aa)). Substrate contacts are provided by W22, H25, Y66, and E79. 81–83 (IYV) contacts acetyl-CoA. Position 115 (D115) interacts with substrate. N120 is a binding site for acetyl-CoA. Residue E136 participates in substrate binding.

As to quaternary structure, homodimer.

It carries out the reaction kanamycin B + acetyl-CoA = N(6')-acetylkanamycin B + CoA + H(+). Functionally, catalyzes the transfer of an acetyl group from acetyl-CoA to the 6'-amino group of aminoglycoside molecules conferring resistance to antibiotics containing the purpurosamine ring including amikacin, kanamycin, tobramycin and netilmicin. This Acinetobacter genomosp. 13 protein is Aminoglycoside N(6')-acetyltransferase type 1.